Consider the following 363-residue polypeptide: Phospho-N-acetylmuramoyl-pentapeptide-transferase (363 aa).

10 helical membrane passes run 33–53 (YAVLMGIALYAGFFFTYGVLP), 82–102 (GVIFVSVFVLLVYLLMRPSFV), 105–125 (LILLLTWGVMLTGYLDDCAQV), 133–153 (GALDFLFAVLTAALLGHFYFH), 166–186 (PVFVSPFLFFAGSVVILWMSI), 198–218 (LSGALVLMALLSMGTIFYFLL), 227–247 (LLVPFVVDGAQWALMSFALAG), 271–291 (ALGFFIGVLVLISGNPFLLLM), 295–315 (VILVNGGTGLLKVVLLRFFHV), and 340–360 (VLLRFMILQGLLTIGLLGVLF).

The protein belongs to the glycosyltransferase 4 family. MraY subfamily. The cofactor is Mg(2+).

It is found in the cell inner membrane. It carries out the reaction UDP-N-acetyl-alpha-D-muramoyl-L-alanyl-gamma-D-glutamyl-meso-2,6-diaminopimeloyl-D-alanyl-D-alanine + di-trans,octa-cis-undecaprenyl phosphate = di-trans,octa-cis-undecaprenyl diphospho-N-acetyl-alpha-D-muramoyl-L-alanyl-D-glutamyl-meso-2,6-diaminopimeloyl-D-alanyl-D-alanine + UMP. It functions in the pathway cell wall biogenesis; peptidoglycan biosynthesis. Functionally, catalyzes the initial step of the lipid cycle reactions in the biosynthesis of the cell wall peptidoglycan: transfers peptidoglycan precursor phospho-MurNAc-pentapeptide from UDP-MurNAc-pentapeptide onto the lipid carrier undecaprenyl phosphate, yielding undecaprenyl-pyrophosphoryl-MurNAc-pentapeptide, known as lipid I. This chain is Phospho-N-acetylmuramoyl-pentapeptide-transferase, found in Treponema pallidum (strain Nichols).